The primary structure comprises 236 residues: Phosphoribosylaminoimidazole-succinocarboxamide synthase (236 aa).

Belongs to the SAICAR synthetase family.

It carries out the reaction 5-amino-1-(5-phospho-D-ribosyl)imidazole-4-carboxylate + L-aspartate + ATP = (2S)-2-[5-amino-1-(5-phospho-beta-D-ribosyl)imidazole-4-carboxamido]succinate + ADP + phosphate + 2 H(+). Its pathway is purine metabolism; IMP biosynthesis via de novo pathway; 5-amino-1-(5-phospho-D-ribosyl)imidazole-4-carboxamide from 5-amino-1-(5-phospho-D-ribosyl)imidazole-4-carboxylate: step 1/2. This chain is Phosphoribosylaminoimidazole-succinocarboxamide synthase, found in Coprothermobacter proteolyticus (strain ATCC 35245 / DSM 5265 / OCM 4 / BT).